A 308-amino-acid chain; its full sequence is MQETQRLAVELPGLSLKNPIIAASGTCGYGQEAAKKYNLNHLGSLVLKSTTLYPRQGNPRPRVCETSAGWLNANGLQNVGITAATNEKIPWLRKNYPQLPIIASAAGFSEDEYVKVVSEFANTAGVKAIELNVSCPNVKHGGMAMGTDPEVLQRLVKQVVKAALGIPIYVKLTPNVTNIVPLAQAAEQGGANGLTMINTLTGLSIDLKTRRPALANVTGGLSGPAIKPLALRMIHQVRQVSSLPIIGVGGIESAEDVLEFMMAGANAVQIGAASFHDPLACPKIAADLPIVMDRYGIKKLTDLWEVRF.

FMN-binding positions include serine 24 and lysine 48–serine 49. Substrate contacts are provided by residues lysine 48, asparagine 72–leucine 76, and asparagine 132. FMN is bound at residue asparagine 132. The active-site Nucleophile is the cysteine 135. Residues lysine 171 and isoleucine 197 each coordinate FMN. Asparagine 198–threonine 199 contributes to the substrate binding site. FMN-binding positions include glycine 223 and glycine 249 to glycine 250.

It belongs to the dihydroorotate dehydrogenase family. Type 1 subfamily. Homodimer. FMN is required as a cofactor.

The protein localises to the cytoplasm. The catalysed reaction is (S)-dihydroorotate + fumarate = orotate + succinate. The protein operates within pyrimidine metabolism; UMP biosynthesis via de novo pathway. Catalyzes the conversion of dihydroorotate to orotate with fumarate as the electron acceptor. This Limosilactobacillus reuteri (strain DSM 20016) (Lactobacillus reuteri) protein is Dihydroorotate dehydrogenase A (fumarate) (pyrD).